We begin with the raw amino-acid sequence, 433 residues long: MTDILNYNKSEEIFSAAQQLMPGGVSSPVRAFKSVGGQPIVFDRVKGPFAWDIDGNRYIDYIGSWGPAICGHAHPEVTTALQEAIEKGTSFGAPCVLENKLAEMVIDAVPSVEMVRFVNSGTEACMAVLRLMRAFTGRDKVIKFDGCYHGHADMFLVKAGSGVATLGLPDSPGVPRTTTANTLTAPYNDLEAVKKLFSENPDAISGVILEPIVGNAGFITPEPGFLEGLRELTTENGSLLVFDEVMTGFRISYGGAQEKFGVTPDLTTLGKVIGGGLPVGAYGGKKEIMSMVAPSGPVYQAGTLSGNPLAMTAGIKTLELLKQDGTYDKLDSTTSRLIEGIIQSAENNGIAINGGSISGMFGFFLCDGPVRNFEEAKTNNSELFGKLHREMLQRGIYLAPSPFEAGFTSLAHSEDEIDQTIEAFDESFNAIKN.

K271 bears the N6-(pyridoxal phosphate)lysine mark.

The protein belongs to the class-III pyridoxal-phosphate-dependent aminotransferase family. HemL subfamily. As to quaternary structure, homodimer. Requires pyridoxal 5'-phosphate as cofactor.

The protein localises to the cytoplasm. It catalyses the reaction (S)-4-amino-5-oxopentanoate = 5-aminolevulinate. It functions in the pathway porphyrin-containing compound metabolism; protoporphyrin-IX biosynthesis; 5-aminolevulinate from L-glutamyl-tRNA(Glu): step 2/2. Its pathway is porphyrin-containing compound metabolism; chlorophyll biosynthesis. This Prochlorococcus marinus (strain MIT 9215) protein is Glutamate-1-semialdehyde 2,1-aminomutase.